Reading from the N-terminus, the 396-residue chain is MAKGKFERTKPHVNVGTIGHVDHGKTTLTAAIATVLSKKFGGEAKGYDQIDNAPEEKARGITINTSHVEYETTTRHYAHVDCPGHADYVKNMITGAAQMDGAILVCSAADGPMPQTREHILLARQVGVPYIIVFLNKCDMVDDAELLELVEMEVRELLSKYEFPGDDLPIIKGSAKLALEGDQGPLGEAAILALADALDSYIPTPERAVDGAFLLPVEDVFSISGRGTVVTGRIERGIVKVGESLEIVGIRDTQVTTCTGVEMFRKLLDQGQAGDNVGVLLRGTKREDVERGQVLAKPGSIKPHKHFTGEIYVLSKDEGGRHTPFFNNYRPQFYFRTTDVTGSIELPKDKEMVMPGDNVSITVMLINPIAMEEGLRFAIREGGRTVGAGVVAKIIE.

The tr-type G domain occupies Lys10–Glu206. The tract at residues Gly19 to Thr26 is G1. Gly19–Thr26 provides a ligand contact to GTP. Position 26 (Thr26) interacts with Mg(2+). Residues Gly60 to Asn64 form a G2 region. Residues Asp81–Gly84 are G3. GTP-binding positions include Asp81 to His85 and Asn136 to Asp139. The segment at Asn136 to Asp139 is G4. Residues Ser174–Lys176 are G5.

Belongs to the TRAFAC class translation factor GTPase superfamily. Classic translation factor GTPase family. EF-Tu/EF-1A subfamily. Monomer.

The protein resides in the cytoplasm. It catalyses the reaction GTP + H2O = GDP + phosphate + H(+). Its function is as follows. GTP hydrolase that promotes the GTP-dependent binding of aminoacyl-tRNA to the A-site of ribosomes during protein biosynthesis. This chain is Elongation factor Tu, found in Herminiimonas arsenicoxydans.